A 209-amino-acid polypeptide reads, in one-letter code: Uracil phosphoribosyltransferase (209 aa).

5-phospho-alpha-D-ribose 1-diphosphate contacts are provided by residues Arg79, Arg104, and 131–139 (DPMLATGGS). Uracil contacts are provided by residues Ile194 and 199–201 (GDA). Asp200 lines the 5-phospho-alpha-D-ribose 1-diphosphate pocket.

The protein belongs to the UPRTase family. Mg(2+) serves as cofactor.

It catalyses the reaction UMP + diphosphate = 5-phospho-alpha-D-ribose 1-diphosphate + uracil. Its pathway is pyrimidine metabolism; UMP biosynthesis via salvage pathway; UMP from uracil: step 1/1. Allosterically activated by GTP. Catalyzes the conversion of uracil and 5-phospho-alpha-D-ribose 1-diphosphate (PRPP) to UMP and diphosphate. The protein is Uracil phosphoribosyltransferase of Exiguobacterium sp. (strain ATCC BAA-1283 / AT1b).